The chain runs to 468 residues: ATP synthase subunit beta (468 aa).

155-162 (GGAGVGKT) contributes to the ATP binding site.

The protein belongs to the ATPase alpha/beta chains family. F-type ATPases have 2 components, CF(1) - the catalytic core - and CF(0) - the membrane proton channel. CF(1) has five subunits: alpha(3), beta(3), gamma(1), delta(1), epsilon(1). CF(0) has three main subunits: a(1), b(2) and c(9-12). The alpha and beta chains form an alternating ring which encloses part of the gamma chain. CF(1) is attached to CF(0) by a central stalk formed by the gamma and epsilon chains, while a peripheral stalk is formed by the delta and b chains.

Its subcellular location is the cell membrane. The enzyme catalyses ATP + H2O + 4 H(+)(in) = ADP + phosphate + 5 H(+)(out). Its function is as follows. Produces ATP from ADP in the presence of a proton gradient across the membrane. The catalytic sites are hosted primarily by the beta subunits. This is ATP synthase subunit beta from Streptococcus agalactiae serotype III (strain NEM316).